The chain runs to 439 residues: MADFAQLEVYIGDLSTAITSLITQCQRNGHATGSPSENLSRLFGLEAPTEAHRARESALVILTKLQIMLAGPTDLLQQMTIQTQLLACIRWLGEFQVPACIPLDGSALMKDVSELIDVPENQLGRIVRMAATCGFLREPEPGHITHSALSASFVTNPSYLDAAMFLAETAAPAALDMVAATKQRLGSSEPASQNVVFDQGFFSAANKTQLRRLQRQWQAYLRHGMAHLCDITTDFLTCLEPLRMGNASIVEVGARSAERAMALVDQYPTLHFTVQLSPASTLSSASKNGTAASKVRHPRIRVQHRVPGTPQPIQDAMVYIINFPVPEPGVSYNSPVAQISAELRAHLAPLRMNRSATIVLTAPSLPERGNVAAVGVARIRDLSLLQLANEQEVEMSDLLSLLNGVGDGEGRLVLVNEMRSAGNHGAVALEVKYQSYTDR.

The region spanning 79 to 149 (MTIQTQLLAC…EPGHITHSAL (71 aa)) is the HTH iclR-type domain. A DNA-binding region (H-T-H motif) is located at residues 109–128 (MKDVSELIDVPENQLGRIVR).

It localises to the nucleus. In terms of biological role, transcriptional coactivator; part of the gene cluster that mediates the biosynthesis of agnestins, dihydroxy-xanthone metabolites. The polypeptide is Agnestins biosynthesis cluster transcriptional coactivator AgnL9 (Paecilomyces divaricatus (Penicillium divaricatum)).